Here is a 421-residue protein sequence, read N- to C-terminus: SH2 domain-containing protein 4A (421 aa).

Residues Ser117 and Ser123 each carry the phosphoserine modification. The segment at 132–271 is disordered; the sequence is DLQAMKKTEP…FLQPLGIPPK (140 aa). Composition is skewed to basic and acidic residues over residues 163-201 and 211-230; these read TRKD…KEDS and KAAD…DYKR. Ser232 carries the post-translational modification Phosphoserine. The 93-residue stretch at 315 to 407 folds into the SH2 domain; the sequence is WFHGILTLKK…LGKELLLYPC (93 aa).

Interacts with ESR1. As to expression, in the kidney, expressed only in the glomerulus. Expressed in T-cells, B-cells, macrophages and dendritic cells (at protein level). In adult, highest levels are found in muscle and lung with lower levels in kidney.

The protein localises to the cytoplasm. In terms of biological role, inhibits estrogen-induced cell proliferation by competing with PLCG for binding to ESR1, blocking the effect of estrogen on PLCG and repressing estrogen-induced proliferation. May play a role in T-cell development and function. This is SH2 domain-containing protein 4A (Sh2d4a) from Mus musculus (Mouse).